Here is a 25-residue protein sequence, read N- to C-terminus: Ocellatin-L1 (25 aa).

Position 25 is a leucine amide (Leu-25).

It belongs to the frog skin active peptide (FSAP) family. Ocellatin subfamily. Expressed by the skin glands.

It is found in the secreted. Functionally, antimicrobial peptide with activity against Gram-negative bacteria but without activity against Gram-positive bacteria. Shows a low activity in stimulating insulin release from rat BRIN-BD11 beta cells, and acts without loss of integrity of the plasma membrane. Has very low hemolytic activity. Shows weak amphipathicity in its alpha-helical conformation. The chain is Ocellatin-L1 from Leptodactylus laticeps (Santa Fe frog).